The sequence spans 393 residues: NAD(P)H-quinone oxidoreductase subunit H, chloroplastic (393 aa).

This sequence belongs to the complex I 49 kDa subunit family. As to quaternary structure, NDH is composed of at least 16 different subunits, 5 of which are encoded in the nucleus.

The protein localises to the plastid. The protein resides in the chloroplast thylakoid membrane. The enzyme catalyses a plastoquinone + NADH + (n+1) H(+)(in) = a plastoquinol + NAD(+) + n H(+)(out). The catalysed reaction is a plastoquinone + NADPH + (n+1) H(+)(in) = a plastoquinol + NADP(+) + n H(+)(out). NDH shuttles electrons from NAD(P)H:plastoquinone, via FMN and iron-sulfur (Fe-S) centers, to quinones in the photosynthetic chain and possibly in a chloroplast respiratory chain. The immediate electron acceptor for the enzyme in this species is believed to be plastoquinone. Couples the redox reaction to proton translocation, and thus conserves the redox energy in a proton gradient. This Calycanthus floridus var. glaucus (Eastern sweetshrub) protein is NAD(P)H-quinone oxidoreductase subunit H, chloroplastic.